A 97-amino-acid polypeptide reads, in one-letter code: UPF0235 protein Daro_3887 (97 aa).

It belongs to the UPF0235 family.

In Dechloromonas aromatica (strain RCB), this protein is UPF0235 protein Daro_3887.